Reading from the N-terminus, the 901-residue chain is Alpha-actinin-3 (901 aa).

At Met-1 the chain carries N-acetylmethionine. Residues 1-261 form an actin-binding region; sequence MMMVLQPEGL…IMTYVSCFYH (261 aa). 2 consecutive Calponin-homology (CH) domains span residues 45 to 149 and 158 to 264; these read KQQR…LRFA and TSAK…HAFA. Spectrin repeat units follow at residues 288-398, 408-513, 523-634, and 644-747; these read KLME…WLLS, HLAE…ALER, QLQL…MLQE, and RLRR…EVEN. 2 consecutive EF-hand domains span residues 760–795 and 796–831; these read EQLNEFRASFNHFDRKRNGMMEPDDFRACLISMGYD and LGEVEFARIMTMVDPNAAGVVTFQAFIDFMTRETAE. Positions 773, 777, 779, 784, 809, and 811 each coordinate Ca(2+).

Belongs to the alpha-actinin family. In terms of assembly, homodimer; antiparallel. Also forms heterodimers with ACTN2. Interacts with MYOZ1.

F-actin cross-linking protein which is thought to anchor actin to a variety of intracellular structures. This is a bundling protein. The sequence is that of Alpha-actinin-3 (ACTN3) from Bos taurus (Bovine).